We begin with the raw amino-acid sequence, 450 residues long: MSLLQFSGLFVVWLLCTLFIATLTWFEFRRVRFNFNVFFSLLFLLTFFFGFPLTSVLVFRFDVGVAPPEILLQALLSAGCFYAVYYVTYKTRLRKRVADVPRRPLFTMNRVETNLTWVILMGIALVSVGIFFMHNGFLLFRLNSYSQIFSSEVSGVALKRFFYFFIPAMLVVYFLRQDSKAWLFFLVSTVAFGLLTYMIVGGTRANIIIAFAIFLFIGIIRGWISLWMLAAAGVLGIVGMFWLALKRYGMNVSGDEAFYTFLYLTRDTFSPWENLALLLQNYDNIDFQGLAPIVRDFYVFIPSWLWPGRPSMVLNSANYFTWEVLNNHSGLAISPTLIGSLVVMGGALFIPLGAIVVGLIIKWFDWLYELGNREPNRYKAAILHSFCFGAIFNMIVLAREGLDSFVSRVVFFIVVFGACLMIAKLLYWLFESAGLIHKRTKSSLRTQVEG.

The next 11 helical transmembrane spans lie at 6-26 (FSGL…LTWF), 37-57 (VFFS…TSVL), 63-83 (VGVA…CFYA), 118-138 (VILM…NGFL), 155-175 (GVAL…VYFL), 181-201 (AWLF…MIVG), 207-227 (IIIA…ISLW), 228-248 (MLAA…LKRY), 341-361 (LVVM…GLII), 378-398 (YKAA…IVLA), and 410-430 (VFFI…YWLF).

This sequence belongs to the WzyE family. As to quaternary structure, probably part of a complex composed of WzxE, WzyE and WzzE.

The protein localises to the cell inner membrane. It participates in bacterial outer membrane biogenesis; enterobacterial common antigen biosynthesis. In terms of biological role, probably involved in the polymerization of enterobacterial common antigen (ECA) trisaccharide repeat units. This chain is Probable ECA polymerase, found in Shigella sonnei (strain Ss046).